The following is a 146-amino-acid chain: Hemoglobin subunit beta (146 aa).

Residue valine 1 is modified to N-acetylvaline. The 145-residue stretch at 2-146 folds into the Globin domain; that stretch reads HLTGEEKSAV…VANALAHKYH (145 aa). Residue threonine 12 is modified to Phosphothreonine. Phosphoserine is present on serine 44. Lysine 59 is modified (N6-acetyllysine). A heme b-binding site is contributed by histidine 63. The residue at position 82 (lysine 82) is an N6-acetyllysine. Position 92 (histidine 92) interacts with heme b. Position 93 is an S-nitrosocysteine (cysteine 93). Lysine 144 bears the N6-acetyllysine mark.

This sequence belongs to the globin family. In terms of assembly, heterotetramer of two alpha chains and two beta chains. Red blood cells.

Its function is as follows. Involved in oxygen transport from the lung to the various peripheral tissues. The sequence is that of Hemoglobin subunit beta (HBB) from Saguinus oedipus (Cotton-top tamarin).